The following is a 216-amino-acid chain: Superoxide dismutase [Mn], mitochondrial (216 aa).

The N-terminal 18 residues, 1–18, are a transit peptide targeting the mitochondrion; that stretch reads MSFLNRNLSRTIKAAVRG. Mn(2+)-binding residues include H44, H92, D176, and H180.

Belongs to the iron/manganese superoxide dismutase family. Requires Mn(2+) as cofactor.

The protein resides in the mitochondrion matrix. It carries out the reaction 2 superoxide + 2 H(+) = H2O2 + O2. Its function is as follows. Destroys superoxide anion radicals which are normally produced within the cells and which are toxic to biological systems. The polypeptide is Superoxide dismutase [Mn], mitochondrial (Sod2) (Glossina morsitans morsitans (Savannah tsetse fly)).